The sequence spans 174 residues: Ly6/PLAUR domain-containing protein 6 (174 aa).

A signal peptide spans 1–22 (MEPWPLMAWGLMLTAITGWIKA). The UPAR/Ly6 domain maps to 47-141 (FKCFTCEDAP…PRNETDAIFS (95 aa)). 6 disulfide bridges follow: C49/C77, C52/C61, C70/C96, C102/C121, C107/C118, and C122/C127. Residues N134 and N147 are each glycosylated (N-linked (GlcNAc...) asparagine). S149 carries GPI-anchor amidated serine lipidation. A propeptide spans 150-174 (AQSTQTLPLLLLSVSITSLMLHSIN) (removed in mature form).

As to quaternary structure, interacts with fzd8 and lrp6.

The protein resides in the cell membrane. It is found in the membrane raft. Acts as an important regulator of embryogenesis through its enhancement of Wnt/beta-catenin signaling. Positively regulates Wnt/beta-catenin signaling by ensuring phosphorylation of lrp6 specifically in plasma membrane rafts and its subsequent internalization into signaling-competent vesicles. Essential for the wnt8-mediated patterning of the mesoderm and neuroectoderm during gastrulation. In Danio rerio (Zebrafish), this protein is Ly6/PLAUR domain-containing protein 6 (lypd6).